The sequence spans 55 residues: MAKPTTIKIRLNSTAGTGHFYVTKKNARTMTEKMTVRKYDPVVRKHVEYKEGKIK.

This sequence belongs to the bacterial ribosomal protein bL33 family.

This is Large ribosomal subunit protein bL33 from Ruegeria pomeroyi (strain ATCC 700808 / DSM 15171 / DSS-3) (Silicibacter pomeroyi).